The primary structure comprises 308 residues: Ceramide synthase 1 LOH3 (308 aa).

The next 6 helical transmembrane spans lie at 25 to 45, 82 to 102, 128 to 148, 154 to 174, 213 to 233, and 258 to 278; these read VLPL…RFVF, CVYY…EPWF, LLYM…VFWE, FGVS…SYVC, FILF…FWIL, and YMFN…WVLM. A TLC domain is found at 73–287; sequence RKFKESAWKC…MYRMLVKQIQ (215 aa). Phosphoserine occurs at positions 298 and 300.

As to expression, expressed ubiquitously at low levels. Not observed in pollen.

It localises to the endoplasmic reticulum membrane. The catalysed reaction is (4R)-hydroxysphinganine + a fatty acyl-CoA = an N-acyl-(4R)-4-hydroxysphinganine + CoA + H(+). It carries out the reaction a sphingoid base + tetracosanoyl-CoA = an N-tetracosanoyl-sphingoid base + CoA + H(+). It catalyses the reaction (4R)-hydroxysphinganine + hexadecanoyl-CoA = N-hexadecanoyl-(4R)-hydroxysphinganine + CoA + H(+). The enzyme catalyses (4R)-hydroxysphinganine + octadecanoyl-CoA = N-octadecanoyl-(4R)-hydroxysphinganine + CoA + H(+). The catalysed reaction is (4R)-hydroxysphinganine + eicosanoyl-CoA = N-eicosanoyl-(4R)-hydroxysphinganine + CoA + H(+). It carries out the reaction docosanoyl-CoA + (4R)-hydroxysphinganine = N-docosanoyl-(4R)-hydroxysphinganine + CoA + H(+). It catalyses the reaction hexacosanoyl-CoA + (4R)-hydroxysphinganine = N-hexacosanoyl-(4R)-hydroxysphinganine + CoA + H(+). The enzyme catalyses tetracosanoyl-CoA + (4R)-hydroxysphinganine = N-tetracosanoyl-(4R)-hydroxysphinganine + CoA + H(+). The catalysed reaction is tetracosanoyl-CoA + sphing-4-enine = N-tetracosanoyl-sphing-4-enine + CoA + H(+). It carries out the reaction sphinga-(4E,8Z)-dienine + tetracosanoyl-CoA = N-tetracosanoylsphinga-(4E,8Z)-dienine + CoA + H(+). It catalyses the reaction sphinga-(4E,8E)-dienine + tetracosanoyl-CoA = N-tetracosanoylsphinga-(4E,8E)-dienine + CoA + H(+). The enzyme catalyses (4R)-hydroxysphing-(8Z)-enine + tetracosanoyl-CoA = N-tetracosanoyl-(4R)-hydroxysphing-(8Z)-enine + CoA + H(+). The catalysed reaction is (4R)-hydroxysphing-(8E)-enine + tetracosanoyl-CoA = N-tetracosanoyl-(4R)-hydroxysphing-(8E)-enine + CoA + H(+). Its pathway is sphingolipid metabolism. Its activity is regulated as follows. Inhibited by the mycotoxin fumonisin B(1), a sphingosine analog mycotoxins produced by pathogenic fungi. Repressed by divalent cation such as magnesium Mg(2+), copper Cu(2+), zinc Zn(2+), manganese Mn(2+), calcium Ca(2+) and cobalt Co(2+). Functionally, essential for plant growth, promotes cell division in root meristems. Catalyzes the biosynthesis of ceramide sphingolipids with C(16) to C(28) fatty acids, structural membrane lipids involved in membrane trafficking (e.g. early endosomes) and cell polarity (e.g. polar auxin transport related proteins); active on a broad substrate spectrum, both regarding chain lengths of fatty acids and the sphingoid base, such as long-chain base (LCB) phytosphingosine (t18:0). Mediates resistance to sphinganine-analog mycotoxins (SAMs, e.g. fumonisin B(1)) by restoring the sphingolipid biosynthesis. Could salvage the transport of GPI-anchored proteins from the endoplasmic reticulum to the Golgi apparatus in ceramides-depleted cells after SAM exposure. Contributes to hypoxic conditions tolerance (e.g. submergences), especially in the dark, by promoting the formation of very-long-chain (VLC) ceramide species (22:1, 24:1 and 26:1) and of VLC unsaturated ceramides, which are modulating CTR1-mediated ethylene signaling leading to endoplasmic reticulum (ER)-to-nucleus translocation of EIN2 and EIN3. This Arabidopsis thaliana (Mouse-ear cress) protein is Ceramide synthase 1 LOH3.